A 356-amino-acid chain; its full sequence is MKTLEMELGQNSYSIFIEKGIMNDIGKRISKLYSGEKIVLITDDNVNKFYGEKLEKNIKDFGYDVFKIVIKAGEKSKNIKTLTDIYSRLAEFRITRSDLIVTLGGGVVGDIGGFAAATYLRGISYIQIPTSLLAQIDSSIGGKVAVDLEQGKNLVGNFYQPKAVFIDPLFLKTLDIRFLHDGMGEVIKYGAIRDGELFKRLEEFKDDNELMDNIEYVIHACCRIKKQVVENDEKDNGERMILNFGHTIGHAVEEFFHYEKFTHGECVAYGMYSITKNSERLGITKEGTTEKLKNIIKKYSLPFNIDNLKNERIYEIAALDKKSRGKFINLVLLKDIGDCFIEKVESKETYKYLRVV.

Residues 106-110 (GVVGD), 130-131 (TS), Lys-143, Lys-152, and 170-173 (FLKT) contribute to the NAD(+) site. Zn(2+)-binding residues include Glu-185, His-246, and His-263.

It belongs to the sugar phosphate cyclases superfamily. Dehydroquinate synthase family. It depends on NAD(+) as a cofactor. The cofactor is Co(2+). Zn(2+) serves as cofactor.

It is found in the cytoplasm. The catalysed reaction is 7-phospho-2-dehydro-3-deoxy-D-arabino-heptonate = 3-dehydroquinate + phosphate. It participates in metabolic intermediate biosynthesis; chorismate biosynthesis; chorismate from D-erythrose 4-phosphate and phosphoenolpyruvate: step 2/7. Catalyzes the conversion of 3-deoxy-D-arabino-heptulosonate 7-phosphate (DAHP) to dehydroquinate (DHQ). This chain is 3-dehydroquinate synthase, found in Clostridium acetobutylicum (strain ATCC 824 / DSM 792 / JCM 1419 / IAM 19013 / LMG 5710 / NBRC 13948 / NRRL B-527 / VKM B-1787 / 2291 / W).